The sequence spans 98 residues: NADH-ubiquinone oxidoreductase chain 4L (98 aa).

Transmembrane regions (helical) follow at residues 1-21 (MTSI…GVLM), 28-48 (STLL…SLLI), and 59-79 (APLI…ALLV).

This sequence belongs to the complex I subunit 4L family. In terms of assembly, core subunit of respiratory chain NADH dehydrogenase (Complex I) which is composed of 45 different subunits.

The protein resides in the mitochondrion inner membrane. The catalysed reaction is a ubiquinone + NADH + 5 H(+)(in) = a ubiquinol + NAD(+) + 4 H(+)(out). Functionally, core subunit of the mitochondrial membrane respiratory chain NADH dehydrogenase (Complex I) which catalyzes electron transfer from NADH through the respiratory chain, using ubiquinone as an electron acceptor. Part of the enzyme membrane arm which is embedded in the lipid bilayer and involved in proton translocation. The polypeptide is NADH-ubiquinone oxidoreductase chain 4L (MT-ND4L) (Phascolarctos cinereus (Koala)).